The chain runs to 1622 residues: DNA (cytosine-5)-methyltransferase 1 (1622 aa).

An interaction with DNMT3A region spans residues 1-145 (MPARTAPARV…RRSKSDSETM (145 aa)). 2 interaction with the PRC2/EED-EZH2 complex regions span residues 1 to 342 (MPAR…VERK) and 304 to 610 (TPEP…TVIN). Phosphoserine is present on Ser15. The DMAP1-binding domain occupies 16-109 (PAGSLPDHVR…TQKANGCPAN (94 aa)). The residue at position 70 (Lys70) is an N6,N6-dimethyllysine; by EHMT2. The segment at 100-360 (TQKANGCPAN…IPKLNPPQCP (261 aa)) is disordered. The span at 126–137 (PRSRPKPRGPRR) shows a compositional bias: basic residues. Ser138 bears the Phosphoserine mark. An N6-methyllysine; by SETD7 modification is found at Lys139. Phosphoserine; by PKB/AKT1 is present on Ser140. Residues 146-213 (IEASSSSVAT…TESRASRAGE (68 aa)) are interaction with DNMT3B. 2 positions are modified to phosphoserine: Ser149 and Ser151. Residues 149 to 166 (SSSSVATRRTTRQTTITS) show a composition bias toward low complexity. Phosphothreonine is present on Thr163. The residue at position 169 (Lys169) is an N6-acetyllysine. The short motif at 173 to 200 (KRKPKEDSEKGNANESAAEERDQDKKRR) is the Nuclear localization signal element. Basic and acidic residues-rich tracts occupy residues 176 to 197 (PKED…DQDK), 207 to 222 (RASR…ERVR), 237 to 269 (DDRR…THLD), and 276 to 300 (KDKR…KEEV). At Thr304 the chain carries Phosphothreonine. A DNA replication foci-targeting sequence region spans residues 327–556 (KPEPLSIPVQ…NVNRFTEDSL (230 aa)). Residues Cys359 and Cys362 each coordinate Zn(2+). The residue at position 372 (Lys372) is an N6-acetyllysine. A Phosphoserine modification is found at Ser400. Residues Cys420 and His424 each coordinate Zn(2+). 2 positions are modified to phosphoserine: Ser515 and Ser555. Residues 650 to 696 (NTMKRRRCGVCEVCQQPECGKCKACKDMVKFGGTGRSKQACLKRRCP) form a CXXC-type zinc finger. Residues Cys657, Cys660, Cys663, Cys668, Cys671, Cys674, Cys690, and Cys695 each contribute to the Zn(2+) site. Residues 697-758 (NLAVKEADED…TYYWKVSIDE (62 aa)) are autoinhibitory linker. A disordered region spans residues 702 to 733 (EADEDEEADDDIPELPSPKKLHQGKKKKQNKD). The segment covering 703-714 (ADEDEEADDDIP) has biased composition (acidic residues). Ser718 is subject to Phosphoserine. Positions 720-731 (KKLHQGKKKKQN) are enriched in basic residues. Ser736 bears the Phosphoserine mark. N6-acetyllysine is present on Lys753. Residues 759–884 (ETLEVGDCVS…QDYARFESPP (126 aa)) form the BAH 1 domain. A Phosphoserine modification is found at Ser882. N6-acetyllysine occurs at positions 895, 961, and 980. The 129-residue stretch at 977–1105 (TYRKYSDYIK…SKTKSFEDPP (129 aa)) folds into the BAH 2 domain. Residues 1099–1138 (KSFEDPPNHARSPGNKGKGKGKGKGKGKPQVSEPKEPEAA) form a disordered region. 6 repeat units span residues 1114–1115 (KG), 1116–1117 (KG), 1118–1119 (KG), 1120–1121 (KG), 1122–1123 (KG), and 1124–1125 (KG). Positions 1114 to 1127 (KGKGKGKGKGKGKP) are 7 X 2 AA tandem repeats of K-G. Positions 1115–1125 (GKGKGKGKGKG) are enriched in basic residues. 6 positions are modified to N6-acetyllysine: Lys1116, Lys1118, Lys1120, Lys1122, Lys1124, and Lys1126. One copy of the 7; approximate repeat lies at 1126 to 1127 (KP). An interaction with the PRC2/EED-EZH2 complex region spans residues 1126–1622 (KPQVSEPKEP…KGKEETTTED (497 aa)). Residues 1144-1603 (LRTLDVFSGC…LEIKLCLLAS (460 aa)) enclose the SAM-dependent MTase C5-type domain. Residues 1144-1622 (LRTLDVFSGC…KGKEETTTED (479 aa)) form a catalytic region. S-adenosyl-L-methionine contacts are provided by residues Ser1151, 1155–1156 (GL), 1173–1174 (EM), 1195–1196 (DC), and Cys1196. Cys1231 is an active-site residue. N6-acetyllysine is present on Lys1354. Ser1436 bears the Phosphoserine mark. 2 residues coordinate S-adenosyl-L-methionine: Asn1582 and Val1584. Lys1613 participates in a covalent cross-link: Glycyl lysine isopeptide (Lys-Gly) (interchain with G-Cter in SUMO2).

It belongs to the class I-like SAM-binding methyltransferase superfamily. C5-methyltransferase family. As to quaternary structure, homodimer. Forms a stable complex with E2F1, BB1 and HDAC1. Forms a complex with DMAP1 and HDAC2, with direct interaction. Interacts with the PRC2/EED-EZH2 complex. Probably part of a corepressor complex containing ZNF304, TRIM28, SETDB1 and DNMT1. Interacts with UHRF1; promoting its recruitment to hemimethylated DNA. Interacts with USP7, promoting its deubiquitination. Interacts with PCNA. Interacts with MBD2 and MBD3. Interacts with DNMT3A and DNMT3B. Interacts with UBC9. Interacts with CSNK1D. Interacts with HDAC1. Interacts with BAZ2A/TIP5. Interacts with SIRT7. Interacts with ZNF263; recruited to the SIX3 promoter along with other proteins involved in chromatin modification and transcriptional corepression where it contributes to transcriptional repression. Interacts with L3MBTL3 and DCAF5; the interaction requires DNMT1 methylation at Lys-139 and is necessary to target DNMT1 for ubiquitination by the CRL4-DCAF5 E3 ubiquitin ligase complex and proteasomal degradation. Interacts with PHF20L1; the interaction requires DNMT1 methylation at Lys-139 and protects DNMT1 from ubiquitination and proteasomal degradation. Post-translationally, sumoylated; sumoylation increases activity. In terms of processing, acetylation on multiple lysines, mainly by KAT2B/PCAF, regulates cell cycle G(2)/M transition. Deacetylation of Lys-1116 and Lys-1354 by SIRT1 increases methyltransferase activity. Phosphorylation of Ser-151 by CDKs is important for enzymatic activity and protein stability. Phosphorylation of Ser-140 by AKT1 prevents methylation by SETD7 thereby increasing DNMT1 stability. Post-translationally, methylation at Lys-139 by SETD7 is necessary for the regulation of DNMT1 proteasomal degradation. In terms of processing, ubiquitinated by UHRF1; interaction with USP7 counteracts ubiquitination by UHRF1 by promoting deubiquitination and preventing degradation by the proteasome. Isoforms 0 and 8 are highly expressed in placenta, brain, lung, spleen, kidney, heart, and at much lower levels in liver. Isoform 1 is expressed in cerebellum, isoform 2 in muscle and testis, isoform 3 in lung, isoform 4 in spleen and brain, and isoform 5 in brain.

The protein localises to the nucleus. It catalyses the reaction a 2'-deoxycytidine in DNA + S-adenosyl-L-methionine = a 5-methyl-2'-deoxycytidine in DNA + S-adenosyl-L-homocysteine + H(+). Functionally, methylates CpG residues. Preferentially methylates hemimethylated DNA. Associates with DNA replication sites in S phase maintaining the methylation pattern in the newly synthesized strand, that is essential for epigenetic inheritance. Associates with chromatin during G2 and M phases to maintain DNA methylation independently of replication. It is responsible for maintaining methylation patterns established in development. DNA methylation is coordinated with methylation of histones. Mediates transcriptional repression by direct binding to HDAC2. In association with DNMT3B and via the recruitment of CTCFL/BORIS, involved in activation of BAG1 gene expression by modulating dimethylation of promoter histone H3 at H3K4 and H3K9. Probably forms a corepressor complex required for activated KRAS-mediated promoter hypermethylation and transcriptional silencing of tumor suppressor genes (TSGs) or other tumor-related genes in colorectal cancer (CRC) cells. Also required to maintain a transcriptionally repressive state of genes in undifferentiated embryonic stem cells (ESCs). Associates at promoter regions of tumor suppressor genes (TSGs) leading to their gene silencing. Promotes tumor growth. The protein is DNA (cytosine-5)-methyltransferase 1 (Dnmt1) of Rattus norvegicus (Rat).